The primary structure comprises 253 residues: Triosephosphate isomerase, cytosolic (253 aa).

The substrate site is built by N10 and K12. The active-site Electrophile is H96. The active-site Proton acceptor is the E166.

This sequence belongs to the triosephosphate isomerase family. In terms of assembly, homodimer.

The protein resides in the cytoplasm. The enzyme catalyses D-glyceraldehyde 3-phosphate = dihydroxyacetone phosphate. It functions in the pathway carbohydrate biosynthesis; gluconeogenesis. Its pathway is carbohydrate degradation; glycolysis; D-glyceraldehyde 3-phosphate from glycerone phosphate: step 1/1. The chain is Triosephosphate isomerase, cytosolic from Secale cereale (Rye).